Consider the following 212-residue polypeptide: Ribonuclease HII (212 aa).

An RNase H type-2 domain is found at 12-201 (ELVAGVDEVG…VRAMLEQVSI (190 aa)). 3 residues coordinate a divalent metal cation: aspartate 18, glutamate 19, and aspartate 110.

It belongs to the RNase HII family. The cofactor is Mn(2+). Mg(2+) serves as cofactor.

Its subcellular location is the cytoplasm. The catalysed reaction is Endonucleolytic cleavage to 5'-phosphomonoester.. Endonuclease that specifically degrades the RNA of RNA-DNA hybrids. This Stutzerimonas stutzeri (strain A1501) (Pseudomonas stutzeri) protein is Ribonuclease HII.